Reading from the N-terminus, the 207-residue chain is Protein DMP1 (207 aa).

The segment at Met-1–Met-20 is disordered. A run of 4 helical transmembrane segments spans residues Leu-33–Thr-53, Val-64–Asp-84, Ile-121–Asp-141, and Leu-159–Pro-179.

The protein belongs to the plant DMP1 protein family. As to expression, expressed in leaves, siliques and roots.

The protein resides in the endoplasmic reticulum membrane. It is found in the vacuole membrane. Its function is as follows. Involved in membrane remodeling including fission during breakdown of the endoplasmic reticulum (ER) and the tonoplast during leaf senescence and in membrane fusion during vacuole biogenesis in roots. This is Protein DMP1 from Arabidopsis thaliana (Mouse-ear cress).